The sequence spans 593 residues: NADH-quinone oxidoreductase subunit C/D (593 aa).

The segment at 1–184 is NADH dehydrogenase I subunit C; that stretch reads MTTGSALYIP…DPFSLNLAKQ (184 aa). The segment at 208–593 is NADH dehydrogenase I subunit D; it reads DYMFLNLGPN…IDFVMADVDR (386 aa).

It in the N-terminal section; belongs to the complex I 30 kDa subunit family. This sequence in the C-terminal section; belongs to the complex I 49 kDa subunit family. In terms of assembly, NDH-1 is composed of 13 different subunits. Subunits NuoB, CD, E, F, and G constitute the peripheral sector of the complex.

The protein resides in the cell inner membrane. It catalyses the reaction a quinone + NADH + 5 H(+)(in) = a quinol + NAD(+) + 4 H(+)(out). Functionally, NDH-1 shuttles electrons from NADH, via FMN and iron-sulfur (Fe-S) centers, to quinones in the respiratory chain. The immediate electron acceptor for the enzyme in this species is believed to be ubiquinone. Couples the redox reaction to proton translocation (for every two electrons transferred, four hydrogen ions are translocated across the cytoplasmic membrane), and thus conserves the redox energy in a proton gradient. This chain is NADH-quinone oxidoreductase subunit C/D, found in Pseudomonas fluorescens (strain ATCC BAA-477 / NRRL B-23932 / Pf-5).